The primary structure comprises 1557 residues: Target of rapamycin complex 1 subunit KOG1 (1557 aa).

4 HEAT repeats span residues 548 to 586 (RHPPEQLPIVLQVLLSQVHRIRALVLLSRFLDLGPWAVY), 588 to 625 (SLSIGIFPYVLKLLQSPAPELKPILVFIWARIMSIDYK), 777 to 814 (CMNTGAVEILLKSLKDPVPEVRTASIFALKHFISGFQD), and 888 to 925 (RQEIGNLISILPLINDGSSLVRKELVVYFSHIVSRYSN). Residues 1084–1098 (SESNSDSDTQSSNTS) are compositionally biased toward low complexity. The disordered stretch occupies residues 1084–1114 (SESNSDSDTQSSNTSMKSHTSKKGPSGLYLL). WD repeat units lie at residues 1207-1248 (NNKS…SKFS), 1252-1293 (PFGT…DTFK), 1296-1346 (SAWR…VEVD), 1350-1390 (KTSS…RDSM), 1400-1440 (KQGV…PVES), 1452-1492 (SQQK…NSFK), and 1517-1557 (TSDA…IDYF).

This sequence belongs to the WD repeat RAPTOR family. In terms of assembly, the target of rapamycin complex 1 (TORC1) is composed of at least KOG1, LST8, TCO89 and either TOR1 (TORC1-A) or TOR2 (TORC1-B). Interacts with PIB2; following activation of PIB2 by glutamine or cysteine. TORC1 binds to and is inhibited by FKBP-rapamycin.

It is found in the cell membrane. It localises to the vacuole membrane. In terms of biological role, component of TORC1, which regulates multiple cellular processes to control cell growth in response to environmental signals. Nutrient limitation and environmental stress signals cause inactivation of TORC1. Active TORC1 positively controls ribosome biogenesis via control of rRNA, ribosomal protein and tRNA gene expression, and rRNA processing. TORC1 positively controls protein biosynthesis by regulation of mRNA stability, translation initiation factor activity, and high-affinity amino acid permeases that serve to provide amino acids for use by the translation machinery. TORC1 also promotes growth by sequestering a number of nutrient and general stress-responsive transcription factors in the cytoplasm. TORC1 negatively controls macroautophagy, a process to recycle surplus cytoplasmic mass under nutrient starvation conditions. KOG1 may have a role in binding and recruiting substrates of TORC1. In Saccharomyces cerevisiae (strain ATCC 204508 / S288c) (Baker's yeast), this protein is Target of rapamycin complex 1 subunit KOG1 (KOG1).